Here is a 230-residue protein sequence, read N- to C-terminus: UPF0173 metal-dependent hydrolase LI0883 (230 aa).

It belongs to the UPF0173 family.

The polypeptide is UPF0173 metal-dependent hydrolase LI0883 (Lawsonia intracellularis (strain PHE/MN1-00)).